Reading from the N-terminus, the 64-residue chain is Putative antitoxin AF_1074 (64 aa).

This sequence belongs to the UPF0165 family.

Possibly the antitoxin component of a type II toxin-antitoxin (TA) system. This chain is Putative antitoxin AF_1074, found in Archaeoglobus fulgidus (strain ATCC 49558 / DSM 4304 / JCM 9628 / NBRC 100126 / VC-16).